A 224-amino-acid polypeptide reads, in one-letter code: 4'-phosphopantetheinyl transferase Sfp (224 aa).

Residues Asp107, Glu109, and Glu151 each contribute to the Mg(2+) site. The tract at residues 158 to 189 (GKGLSLPLDSFSVRLHQDGQVSIELPDSHSPC) is peptidyl carrier protein binding.

Belongs to the P-Pant transferase superfamily. Gsp/Sfp/HetI/AcpT family. In terms of assembly, monomer in solution. Mg(2+) is required as a cofactor.

The enzyme catalyses apo-[ACP] + CoA = holo-[ACP] + adenosine 3',5'-bisphosphate + H(+). Activates the seven peptidyl carrier protein (PCP) domains of the first three subunits (SrfAA, SrfAB and SrfAC) of surfactin synthetase by transferring the 4'-phosphopantetheinyl moiety of coenzyme A (CoA) to a serine residue. Required for cells of B.subtilis to become producers of the lipopeptide antibiotics surfactin and plipastatin B1. The sequence is that of 4'-phosphopantetheinyl transferase Sfp (sfp) from Bacillus subtilis (strain 168).